Reading from the N-terminus, the 35-residue chain is Photosystem II reaction center protein T (35 aa).

A helical membrane pass occupies residues 3–23 (ALVYTFLLVGTLGIIFFAIFF).

The protein belongs to the PsbT family. In terms of assembly, PSII is composed of 1 copy each of membrane proteins PsbA, PsbB, PsbC, PsbD, PsbE, PsbF, PsbH, PsbI, PsbJ, PsbK, PsbL, PsbM, PsbT, PsbY, PsbZ, Psb30/Ycf12, at least 3 peripheral proteins of the oxygen-evolving complex and a large number of cofactors. It forms dimeric complexes.

The protein resides in the plastid. The protein localises to the chloroplast thylakoid membrane. Its function is as follows. Found at the monomer-monomer interface of the photosystem II (PS II) dimer, plays a role in assembly and dimerization of PSII. PSII is a light-driven water plastoquinone oxidoreductase, using light energy to abstract electrons from H(2)O, generating a proton gradient subsequently used for ATP formation. This chain is Photosystem II reaction center protein T, found in Marchantia polymorpha (Common liverwort).